The sequence spans 180 residues: Interleukin-17B (180 aa).

The signal sequence occupies residues 1 to 22; the sequence is MDWPHSLLFLLAISIFLAPSHP. Residues 22–44 form a disordered region; the sequence is PRNTKGKRKGQGRPSPLAPGPHQ. Basic residues predominate over residues 23–32; sequence RNTKGKRKGQ. Asn-75 is a glycosylation site (N-linked (GlcNAc...) asparagine). Cystine bridges form between Cys-121/Cys-176 and Cys-126/Cys-178.

Belongs to the IL-17 family.

Its subcellular location is the secreted. Stimulates the release of tumor necrosis factor alpha and IL-1-beta from the monocytic cell line THP-1. In Mus musculus (Mouse), this protein is Interleukin-17B (Il17b).